We begin with the raw amino-acid sequence, 214 residues long: Sugar transporter SWEET1 (214 aa).

Transmembrane regions (helical) follow at residues 3-23 (WMWLLSGACIVFTLGMFSSGL), 38-58 (IQFLPFLTTDLNNLGWFYYGY), 65-85 (LIIVNLIGASLQTLYMAAYIL), 93-113 (VVSQVLVSLGVLFLAHCYFTL), 125-145 (LGLFCSIFTISMYLSPLADLA), 157-177 (SFPLTVATFLTSTSWVLYGWV), and 181-201 (LYITVPNFPGIVTSLLRFWLF). Residues 6-89 (LLSGACIVFT…MAAYILYSLE (84 aa)) form the MtN3/slv 1 domain. The region spanning 124–207 (QLGLFCSIFT…FWLFSRYPPD (84 aa)) is the MtN3/slv 2 domain.

The protein belongs to the SWEET sugar transporter family.

Its subcellular location is the golgi apparatus membrane. It is found in the cell membrane. Its function is as follows. Mediates sugar transport across membranes. The polypeptide is Sugar transporter SWEET1 (slc50a1) (Xenopus tropicalis (Western clawed frog)).